A 583-amino-acid polypeptide reads, in one-letter code: Ribonuclease ZC3H12A (583 aa).

The segment covering 1 to 11 (MSLWELEDRRS) has biased composition (basic and acidic residues). Disordered stretches follow at residues 1 to 29 (MSLW…EATT) and 73 to 119 (GSAA…GSDL). Low complexity predominate over residues 15 to 29 (TPRPAQEPTAEEATT). Residues 26–71 (EATTAELQMKVDFFRKLGYSSAEIHSVLQKLGIQADTNTVLGELVK) are ubiquitin association domain. The interval 65 to 134 (VLGELVKHGS…DGSNVAMSHG (70 aa)) is necessary for interaction with TANK. Over residues 73 to 82 (GSAAERERQA) the composition is skewed to basic and acidic residues. Ser83 carries the post-translational modification Phosphoserine. Residues 96–281 (GGGTPKAPTV…LDNFLRKKPL (186 aa)) are RNase. Residues 119 to 274 (LRPIVIDGSN…LGRHGPSLDN (156 aa)) form the RNase NYN domain. The tract at residues 198-204 (RRVGGKR) is RNA binding. Asp210 is a Mg(2+) binding site. Disordered regions lie at residues 262–290 (DDPL…KQPC) and 323–404 (ANAL…PSEW). The C3H1-type zinc-finger motif lies at 284–309 (EHKKQPCPYGRKCTYGIKCRFLHPER). Residues 285 to 441 (HKKQPCPYGR…SELWGVRGGG (157 aa)) are necessary for interaction with ZC3H12D. The segment covering 341–352 (RPSPSSQPGSLP) has biased composition (low complexity). The segment covering 353 to 364 (TEHEQCSPDRKK) has biased composition (basic and acidic residues). Low complexity predominate over residues 384-393 (PTGRSLPPSG). 2 positions are modified to phosphoserine: Ser422 and Ser426. The tract at residues 503 to 530 (YQLPPPTQRLQEPQAPGPGADRGPWGGA) is disordered.

Belongs to the ZC3H12 family. In terms of assembly, oligomer. Found in a deubiquitination complex with TANK, USP10 and ZC3H12A; this complex inhibits genotoxic stress- or interleukin-1-beta-mediated NF-kappaB activation by promoting IKBKG or TRAF6 deubiquitination. Interacts with IKBKG; this interaction increases in response to DNA damage. Interacts with TANK; this interaction increases in response to DNA damage and serves as a bridge to anchor both TANK and USP10 into a deubiquitinating complex. Interacts with TRAF6; this interaction increases in response to DNA damage and is stimulated by TANK. Interacts with USP10; this interaction increases in response to DNA damage and serves as a bridge to anchor both TANK and USP10 into a deubiquitinating complex. Interacts with ZC3H12D. Interacts with TNRC6A. Interacts with IKBKB/IKKB. Interacts with IKBKB/IKKB. Interacts with BTRC; the interaction occurs when ZC3H12A is phosphorylated in a IKBKB/IKKB-dependent manner. Interacts with IRAK1; this interaction increases the interaction between ZC3H12A and IKBKB/IKKB. Interacts with UPF1; this interaction occurs in a mRNA translationally active- and termination-dependent manner and is essential for ZC3H12A-mediated degradation of target mRNAs. Associates with ribosomes. Interacts with ubiquitin. Requires Mg(2+) as cofactor. Post-translationally, phosphorylated by IRAK1; phosphorylation is necessary for subsequent phosphorylation by the I-kappa-B-kinase (IKK) complex. Phosphorylated by I-kappa-B-kinase (IKK) subunits IKBKB/IKKB and CHUK/IKKA at Ser-422 and Ser-426; these phosphorylations promote ubiquitin proteasome-mediated degradation of ZC3H12A and hence facilitates rapid and robust production of IL-6 mRNA in response to toll-like receptor (TLR) or IL-1 receptor stimuli. In terms of processing, ubiquitinated; ubiquitination is induced in response to interleukin IL1 receptor stimuli in a IKBKB/IKKB and IRAK1-dependent manner, leading to proteasome-mediated degradation. Proteolytically cleaved between Arg-95 and Arg-198 by MALT1 in activated T-cells; cleavage at Arg-95 is critical for promoting ZC3H12A degradation in response to T-cell receptor (TCR) stimulation, and hence is necessary for prolonging the stability of a set of mRNAs controlling T-cell activation and Th17 cell differentiation.

It is found in the nucleus. Its subcellular location is the cytoplasm. The protein localises to the P-body. It localises to the rough endoplasmic reticulum membrane. The protein resides in the cytoplasmic granule. Its function is as follows. Endoribonuclease involved in various biological functions such as cellular inflammatory response and immune homeostasis, glial differentiation of neuroprogenitor cells, cell death of cardiomyocytes, adipogenesis and angiogenesis. Functions as an endoribonuclease involved in mRNA decay. Modulates the inflammatory response by promoting the degradation of a set of translationally active cytokine-induced inflammation-related mRNAs, such as IL6 and IL12B, during the early phase of inflammation. Prevents aberrant T-cell-mediated immune reaction by degradation of multiple mRNAs controlling T-cell activation, such as those encoding cytokines (IL6 and IL2), cell surface receptors (ICOS, TNFRSF4 and TNFR2) and transcription factor (REL). Inhibits cooperatively with ZC3H12A the differentiation of helper T cells Th17 in lungs. They repress target mRNA encoding the Th17 cell-promoting factors IL6, ICOS, REL, IRF4, NFKBID and NFKBIZ. The cooperation requires RNA-binding by RC3H1 and the nuclease activity of ZC3H12A. Together with RC3H1, destabilizes TNFRSF4/OX40 mRNA by binding to the conserved stem loop structure in its 3'UTR. Self regulates by destabilizing its own mRNA. Cleaves mRNA harboring a stem-loop (SL), often located in their 3'-UTRs, during the early phase of inflammation in a helicase UPF1-dependent manner. Plays a role in the inhibition of microRNAs (miRNAs) biogenesis. Cleaves the terminal loop of a set of precursor miRNAs (pre-miRNAs) important for the regulation of the inflammatory response leading to their degradation, and thus preventing the biosynthesis of mature miRNAs. Also plays a role in promoting angiogenesis in response to inflammatory cytokines by inhibiting the production of antiangiogenic microRNAs via its anti-dicer RNase activity. Affects the overall ubiquitination of cellular proteins. Positively regulates deubiquitinase activity promoting the cleavage at 'Lys-48'- and 'Lys-63'-linked polyubiquitin chains on TNF receptor-associated factors (TRAFs), preventing JNK and NF-kappa-B signaling pathway activation, and hence negatively regulating macrophage-mediated inflammatory response and immune homeostasis. Also induces deubiquitination of the transcription factor HIF1A, probably leading to its stabilization and nuclear import, thereby positively regulating the expression of proangiogenic HIF1A-targeted genes. Involved in a TANK-dependent negative feedback response to attenuate NF-kappaB activation through the deubiquitination of IKBKG or TRAF6 in response to interleukin-1-beta (IL1B) stimulation or upon DNA damage. Prevents stress granules (SGs) formation and promotes macrophage apoptosis under stress conditions, including arsenite-induced oxidative stress, heat shock, and energy deprivation. Plays a role in the regulation of macrophage polarization; promotes IL4-induced polarization of macrophages M1 into anti-inflammatory M2 state. May also act as a transcription factor that regulates the expression of multiple genes involved in inflammatory response, angiogenesis, adipogenesis and apoptosis. Functions as a positive regulator of glial differentiation of neuroprogenitor cells through an amyloid precursor protein (APP)-dependent signaling pathway. Attenuates septic myocardial contractile dysfunction in response to lipopolysaccharide (LPS) by reducing I-kappa-B-kinase (IKK)-mediated NF-kappa-B activation, and hence myocardial pro-inflammatory cytokine production. In Bos taurus (Bovine), this protein is Ribonuclease ZC3H12A.